The primary structure comprises 487 residues: E3 ubiquitin-protein ligase RNF8 (487 aa).

The FHA domain occupies 38–92 (VTVGRGFGVTYQLVSKICPLMISRNHCILKQNAEGQWTIKDNKSLNGVWLNRERL). The segment at 68-72 (QNAEG) is required for interaction with PIWIL1. Disordered regions lie at residues 143 to 176 (MMEK…KSKI) and 182 to 201 (EPGQ…QPSE). Ser-157 is modified (phosphoserine). Residues 405 to 443 (CIICSEYFVEAVTLNCAHSFCSYCINEWMKRKVECPICR) form an RING-type zinc finger.

Belongs to the RNF8 family. As to quaternary structure, homodimer. Forms a E2-E3 ubiquitin ligase complex composed of the RNF8 homodimer and a E2 heterodimer of UBE2N and UBE2V2. Interacts with class III E2s, including UBE2E1, UBE2E2, and UBE2E3 and with UBE2N. Interacts with RXRA. Interacts (via FHA domain) with phosphorylated HERC2 (via C-terminus). Interacts with PIWIL1; leading to sequester RNF8 in the cytoplasm. Interacts with WRAP53/TCAB1. Post-translationally, autoubiquitinated through 'Lys-48' and 'Lys-63' of ubiquitin. 'Lys-63' polyubiquitination is mediated by UBE2N. 'Lys-29'-type polyubiquitination is also observed, but it doesn't require its own functional RING-type zinc finger.

It is found in the nucleus. The protein resides in the cytoplasm. The protein localises to the midbody. It localises to the chromosome. Its subcellular location is the telomere. The catalysed reaction is S-ubiquitinyl-[E2 ubiquitin-conjugating enzyme]-L-cysteine + [acceptor protein]-L-lysine = [E2 ubiquitin-conjugating enzyme]-L-cysteine + N(6)-ubiquitinyl-[acceptor protein]-L-lysine.. It functions in the pathway protein modification; protein ubiquitination. E3 ubiquitin-protein ligase that plays a key role in DNA damage signaling via 2 distinct roles: by mediating the 'Lys-63'-linked ubiquitination of histones H2A and H2AX and promoting the recruitment of DNA repair proteins at double-strand breaks (DSBs) sites, and by catalyzing 'Lys-48'-linked ubiquitination to remove target proteins from DNA damage sites. Following DNA DSBs, it is recruited to the sites of damage by ATM-phosphorylated MDC1 and catalyzes the 'Lys-63'-linked ubiquitination of histones H2A and H2AX, thereby promoting the formation of TP53BP1 and BRCA1 ionizing radiation-induced foci (IRIF). Also controls the recruitment of UIMC1-BRCC3 (RAP80-BRCC36) and PAXIP1/PTIP to DNA damage sites. Promotes the recruitment of NBN to DNA damage sites by catalyzing 'Lys-6'-linked ubiquitination of NBN. Also recruited at DNA interstrand cross-links (ICLs) sites and catalyzes 'Lys-63'-linked ubiquitination of histones H2A and H2AX, leading to recruitment of FAAP20 and Fanconi anemia (FA) complex, followed by interstrand cross-link repair. H2A ubiquitination also mediates the ATM-dependent transcriptional silencing at regions flanking DSBs in cis, a mechanism to avoid collision between transcription and repair intermediates. Promotes the formation of 'Lys-63'-linked polyubiquitin chains via interactions with the specific ubiquitin-conjugating UBE2N/UBC13 and ubiquitinates non-histone substrates such as PCNA. Substrates that are polyubiquitinated at 'Lys-63' are usually not targeted for degradation. Also catalyzes the formation of 'Lys-48'-linked polyubiquitin chains via interaction with the ubiquitin-conjugating UBE2L6/UBCH8, leading to degradation of substrate proteins such as CHEK2, JMJD2A/KDM4A and KU80/XRCC5: it is still unclear how the preference toward 'Lys-48'- versus 'Lys-63'-linked ubiquitination is regulated but it could be due to RNF8 ability to interact with specific E2 specific ligases. For instance, interaction with phosphorylated HERC2 promotes the association between RNF8 and UBE2N/UBC13 and favors the specific formation of 'Lys-63'-linked ubiquitin chains. Promotes non-homologous end joining (NHEJ) by promoting the 'Lys-48'-linked ubiquitination and degradation the of KU80/XRCC5. Following DNA damage, mediates the ubiquitination and degradation of JMJD2A/KDM4A in collaboration with RNF168, leading to unmask H4K20me2 mark and promote the recruitment of TP53BP1 at DNA damage sites. Following DNA damage, mediates the ubiquitination and degradation of POLD4/p12, a subunit of DNA polymerase delta. In the absence of POLD4, DNA polymerase delta complex exhibits higher proofreading activity. In addition to its function in damage signaling, also plays a role in higher-order chromatin structure by mediating extensive chromatin decondensation. Involved in the activation of ATM by promoting histone H2B ubiquitination, which indirectly triggers histone H4 'Lys-16' acetylation (H4K16ac), establishing a chromatin environment that promotes efficient activation of ATM kinase. Required in the testis, where it plays a role in the replacement of histones during spermatogenesis. At uncapped telomeres, promotes the joining of deprotected chromosome ends by inducing H2A ubiquitination and TP53BP1 recruitment, suggesting that it may enhance cancer development by aggravating telomere-induced genome instability in case of telomeric crisis. Promotes the assembly of RAD51 at DNA DSBs in the absence of BRCA1 and TP53BP1 Also involved in class switch recombination in immune system, via its role in regulation of DSBs repair. May be required for proper exit from mitosis after spindle checkpoint activation and may regulate cytokinesis. May play a role in the regulation of RXRA-mediated transcriptional activity. Not involved in RXRA ubiquitination by UBE2E2. This is E3 ubiquitin-protein ligase RNF8 from Bos taurus (Bovine).